Consider the following 185-residue polypeptide: Elongation factor P (185 aa).

Belongs to the elongation factor P family.

It localises to the cytoplasm. It participates in protein biosynthesis; polypeptide chain elongation. Functionally, involved in peptide bond synthesis. Stimulates efficient translation and peptide-bond synthesis on native or reconstituted 70S ribosomes in vitro. Probably functions indirectly by altering the affinity of the ribosome for aminoacyl-tRNA, thus increasing their reactivity as acceptors for peptidyl transferase. In Dechloromonas aromatica (strain RCB), this protein is Elongation factor P.